The chain runs to 254 residues: Small ribosomal subunit protein uS2 (254 aa).

The protein belongs to the universal ribosomal protein uS2 family.

This chain is Small ribosomal subunit protein uS2, found in Legionella pneumophila (strain Corby).